The sequence spans 904 residues: Trichohyalin-like protein 1 (904 aa).

The EF-hand domain maps to 48–83; that stretch reads CVLHAVEKNSNLLNIDSNGIISFDEFVLAIFNLLNL. 2 disordered regions span residues 102-792 and 858-890; these read PEKE…CSVE and PYTR…HPQR. Polar residues predominate over residues 113 to 128; sequence QATTGDGQWTVGTSPT. 5 stretches are compositionally biased toward basic and acidic residues: residues 172–185, 222–240, 268–300, 349–371, and 385–398; these read ASEH…HLEG, TERK…EPAR, ATQR…DEPS, NLGE…ETKD, and SDMR…RGPE. Residues 443–452 are compositionally biased toward polar residues; the sequence is ETQYLSSEGG. Residues 524–536 show a composition bias toward acidic residues; it reads VEEEDGYQGEDPE. The span at 538 to 554 shows a compositional bias: polar residues; that stretch reads PFTQSDEGSSETPNSLA. Low complexity predominate over residues 555–578; sequence SEEGNSSSETGELPVQGDSQSQGD. The span at 586–598 shows a compositional bias: polar residues; sequence GGHNNNPDTQRQG. The segment covering 759–770 has biased composition (basic and acidic residues); the sequence is GDQKSPAKKEHN. Positions 771–780 are enriched in polar residues; that stretch reads SSVPWSSLEK. Basic and acidic residues predominate over residues 881–890; that stretch reads LEDKQGHPQR.

The protein belongs to the S-100 family.

This chain is Trichohyalin-like protein 1 (TCHHL1), found in Homo sapiens (Human).